Here is a 494-residue protein sequence, read N- to C-terminus: Aspartyl/glutamyl-tRNA(Asn/Gln) amidotransferase subunit B (494 aa).

It belongs to the GatB/GatE family. GatB subfamily. In terms of assembly, heterotrimer of A, B and C subunits.

The enzyme catalyses L-glutamyl-tRNA(Gln) + L-glutamine + ATP + H2O = L-glutaminyl-tRNA(Gln) + L-glutamate + ADP + phosphate + H(+). It carries out the reaction L-aspartyl-tRNA(Asn) + L-glutamine + ATP + H2O = L-asparaginyl-tRNA(Asn) + L-glutamate + ADP + phosphate + 2 H(+). In terms of biological role, allows the formation of correctly charged Asn-tRNA(Asn) or Gln-tRNA(Gln) through the transamidation of misacylated Asp-tRNA(Asn) or Glu-tRNA(Gln) in organisms which lack either or both of asparaginyl-tRNA or glutaminyl-tRNA synthetases. The reaction takes place in the presence of glutamine and ATP through an activated phospho-Asp-tRNA(Asn) or phospho-Glu-tRNA(Gln). In Rhizorhabdus wittichii (strain DSM 6014 / CCUG 31198 / JCM 15750 / NBRC 105917 / EY 4224 / RW1) (Sphingomonas wittichii), this protein is Aspartyl/glutamyl-tRNA(Asn/Gln) amidotransferase subunit B.